Reading from the N-terminus, the 487-residue chain is MGSRLHVQQIKNGPPLPYKDDIRAFTRDYAASLDAQDPLSHFREEFIIPSVKDLKRKTLDPSEGEYSSMYLDARCIYLCGNSLGLQPRNTKKYINYYLRTWAIKGVTGHFTHHDDELLPPFVDVDSAGAKLMAPVVGALESEVAVMGSLTTNLHLLMASFYRPTTERYKIIIEGKAFPSDHYAVESQIKHHNLQPKDAMVLIEPQDPEHPILETDRILRVIDEHASTTALLLLSAIQYYTGQYFNIEKITAHAQSKGIVVGWDCAHAAGNVDLKLHDWNVDFAAWCNYKYLNSGPGGMAGIFVHEKHGEVKAGQGDGELELFRPRLSGWWGGDKATRFLMDNHFVPQSGAAGYQLSNPSVLDMNAVVASLELFNRTSMAEIRQKSLNLTGYLEHLLLASLDGVSDKPFSIITPPNPSERGAQLSLRLAPGLLDSVLETLEEYAVVIDERKPDVIRVAPAPLYNTYEEVWQFCQIFSEACRKALEKKD.

Residues L149, T150, 177 to 180, S234, D263, H266, and Y288 contribute to the pyridoxal 5'-phosphate site; that span reads FPSD. K289 bears the N6-(pyridoxal phosphate)lysine mark. Pyridoxal 5'-phosphate contacts are provided by W329 and N357.

Belongs to the kynureninase family. As to quaternary structure, homodimer. The cofactor is pyridoxal 5'-phosphate.

Its subcellular location is the cytoplasm. It catalyses the reaction L-kynurenine + H2O = anthranilate + L-alanine + H(+). The catalysed reaction is 3-hydroxy-L-kynurenine + H2O = 3-hydroxyanthranilate + L-alanine + H(+). The protein operates within amino-acid degradation; L-kynurenine degradation; L-alanine and anthranilate from L-kynurenine: step 1/1. It functions in the pathway cofactor biosynthesis; NAD(+) biosynthesis; quinolinate from L-kynurenine: step 2/3. Catalyzes the cleavage of L-kynurenine (L-Kyn) and L-3-hydroxykynurenine (L-3OHKyn) into anthranilic acid (AA) and 3-hydroxyanthranilic acid (3-OHAA), respectively. This is Kynureninase 1 (bna5-1) from Emericella nidulans (strain FGSC A4 / ATCC 38163 / CBS 112.46 / NRRL 194 / M139) (Aspergillus nidulans).